The chain runs to 546 residues: Chaperonin GroEL 1 (546 aa).

ATP-binding positions include 30-33 (TLGP), K51, 87-91 (DGTTT), G415, 479-481 (NAA), and D495. The interval 526 to 546 (KEDAPMPGGMPGGMGGMGMDM) is disordered. Residues 534-546 (GMPGGMGGMGMDM) are compositionally biased toward gly residues.

It belongs to the chaperonin (HSP60) family. As to quaternary structure, forms a cylinder of 14 subunits composed of two heptameric rings stacked back-to-back. Interacts with the co-chaperonin GroES.

Its subcellular location is the cytoplasm. It carries out the reaction ATP + H2O + a folded polypeptide = ADP + phosphate + an unfolded polypeptide.. Its function is as follows. Together with its co-chaperonin GroES, plays an essential role in assisting protein folding. The GroEL-GroES system forms a nano-cage that allows encapsulation of the non-native substrate proteins and provides a physical environment optimized to promote and accelerate protein folding. The polypeptide is Chaperonin GroEL 1 (Burkholderia pseudomallei (strain K96243)).